A 345-amino-acid polypeptide reads, in one-letter code: Protease HtpX homolog (345 aa).

Transmembrane regions (helical) follow at residues 6–26 (TAMLLAFMTALFMGVGYLVGG) and 27–47 (SNGMVIALLMAGGLNFFSYWN). Histidine 130 contributes to the Zn(2+) binding site. Glutamate 131 is an active-site residue. Histidine 134 is a Zn(2+) binding site. The next 2 membrane-spanning stretches (helical) occupy residues 145-165 (LTATIAGAISMLGNFAFFMGG) and 179-199 (IGGLLALFVAPFAAMLVQMAI). Glutamate 204 is a Zn(2+) binding site.

This sequence belongs to the peptidase M48B family. Zn(2+) serves as cofactor.

The protein localises to the cell inner membrane. This Bartonella henselae (strain ATCC 49882 / DSM 28221 / CCUG 30454 / Houston 1) (Rochalimaea henselae) protein is Protease HtpX homolog.